The chain runs to 311 residues: Quinolinate synthase (311 aa).

H25 and S42 together coordinate iminosuccinate. C87 provides a ligand contact to [4Fe-4S] cluster. Iminosuccinate is bound by residues 113 to 115 (YIN) and S130. A [4Fe-4S] cluster-binding site is contributed by C175. Iminosuccinate-binding positions include 201 to 203 (HPE) and T218. C268 lines the [4Fe-4S] cluster pocket.

Belongs to the quinolinate synthase family. Type 2 subfamily. Requires [4Fe-4S] cluster as cofactor.

The protein localises to the cytoplasm. It catalyses the reaction iminosuccinate + dihydroxyacetone phosphate = quinolinate + phosphate + 2 H2O + H(+). The protein operates within cofactor biosynthesis; NAD(+) biosynthesis; quinolinate from iminoaspartate: step 1/1. Functionally, catalyzes the condensation of iminoaspartate with dihydroxyacetone phosphate to form quinolinate. This Saccharolobus solfataricus (strain ATCC 35092 / DSM 1617 / JCM 11322 / P2) (Sulfolobus solfataricus) protein is Quinolinate synthase.